A 270-amino-acid polypeptide reads, in one-letter code: 3-methyl-2-oxobutanoate hydroxymethyltransferase (270 aa).

Mg(2+) contacts are provided by aspartate 53 and aspartate 92. 3-methyl-2-oxobutanoate contacts are provided by residues 53–54, aspartate 92, and lysine 120; that span reads DS. Glutamate 122 contacts Mg(2+). Glutamate 189 acts as the Proton acceptor in catalysis.

The protein belongs to the PanB family. Homodecamer; pentamer of dimers. Requires Mg(2+) as cofactor.

The protein localises to the cytoplasm. It catalyses the reaction 3-methyl-2-oxobutanoate + (6R)-5,10-methylene-5,6,7,8-tetrahydrofolate + H2O = 2-dehydropantoate + (6S)-5,6,7,8-tetrahydrofolate. Its pathway is cofactor biosynthesis; (R)-pantothenate biosynthesis; (R)-pantoate from 3-methyl-2-oxobutanoate: step 1/2. Catalyzes the reversible reaction in which hydroxymethyl group from 5,10-methylenetetrahydrofolate is transferred onto alpha-ketoisovalerate to form ketopantoate. This Saccharophagus degradans (strain 2-40 / ATCC 43961 / DSM 17024) protein is 3-methyl-2-oxobutanoate hydroxymethyltransferase.